The sequence spans 102 residues: UPF0058 protein MTH_224 (102 aa).

This sequence belongs to the UPF0058 family.

This chain is UPF0058 protein MTH_224, found in Methanothermobacter thermautotrophicus (strain ATCC 29096 / DSM 1053 / JCM 10044 / NBRC 100330 / Delta H) (Methanobacterium thermoautotrophicum).